The chain runs to 201 residues: Small ribosomal subunit protein uS4 (201 aa).

An S4 RNA-binding domain is found at 103–167 (RRLQTIVTKK…SKIPQVLEKT (65 aa)). A disordered region spans residues 163 to 201 (VLEKTKSEAPAEETVEAPAEETVEAPAEEKKEESPSTES). Acidic residues predominate over residues 172–185 (PAEETVEAPAEETV). Positions 189 to 201 (AEEKKEESPSTES) are enriched in basic and acidic residues.

This sequence belongs to the universal ribosomal protein uS4 family. In terms of assembly, part of the 30S ribosomal subunit. Contacts protein S5. The interaction surface between S4 and S5 is involved in control of translational fidelity.

One of the primary rRNA binding proteins, it binds directly to 16S rRNA where it nucleates assembly of the body of the 30S subunit. In terms of biological role, with S5 and S12 plays an important role in translational accuracy. This is Small ribosomal subunit protein uS4 from Nitrosopumilus maritimus (strain SCM1).